We begin with the raw amino-acid sequence, 101 residues long: RNA-3 uncharacterized 11.6 kDa protein (101 aa).

The protein is RNA-3 uncharacterized 11.6 kDa protein of Beet necrotic yellow vein mosaic virus (isolate Yugoslavia/G1) (BNYVV).